The chain runs to 130 residues: Histone H2A type 1-D (130 aa).

The disordered stretch occupies residues 1–22; it reads MSGRGKQGGKARAKAKTRSSRA. Position 2 is an N-acetylserine (S2). Residue S2 is modified to Phosphoserine; by RPS6KA5. Position 4 is a citrulline; alternate (R4). A Symmetric dimethylarginine; by PRMT5; alternate modification is found at R4. 2 positions are modified to N6-(2-hydroxyisobutyryl)lysine; alternate: K6 and K10. K6 bears the N6-acetyllysine; alternate mark. The segment covering 7–19 has biased composition (basic residues); the sequence is QGGKARAKAKTRS. Residues K10 and K14 each carry the N6-(beta-hydroxybutyryl)lysine; alternate modification. K10 carries the post-translational modification N6-lactoyllysine; alternate. At K10 the chain carries N6-succinyllysine; alternate. K14 is covalently cross-linked (Glycyl lysine isopeptide (Lys-Gly) (interchain with G-Cter in ubiquitin); alternate). Residue K16 forms a Glycyl lysine isopeptide (Lys-Gly) (interchain with G-Cter in ubiquitin) linkage. The residue at position 37 (K37) is an N6-(2-hydroxyisobutyryl)lysine; alternate. An N6-(beta-hydroxybutyryl)lysine; alternate modification is found at K37. K37 bears the N6-crotonyllysine; alternate mark. Residues K75 and K76 each carry the N6-(2-hydroxyisobutyryl)lysine modification. K96 carries the post-translational modification N6-(2-hydroxyisobutyryl)lysine; alternate. At K96 the chain carries N6-(beta-hydroxybutyryl)lysine; alternate. Position 96 is an N6-succinyllysine; alternate (K96). K96 bears the N6-glutaryllysine; alternate mark. K100 bears the N6-glutaryllysine mark. Q105 is subject to N5-methylglutamine. K119 carries the post-translational modification N6-(2-hydroxyisobutyryl)lysine; alternate. K119 is subject to N6-(beta-hydroxybutyryl)lysine; alternate. N6-crotonyllysine; alternate is present on residues K119 and K120. N6-glutaryllysine; alternate is present on residues K119 and K120. K120 is covalently cross-linked (Glycyl lysine isopeptide (Lys-Gly) (interchain with G-Cter in ubiquitin); alternate). T121 is subject to Phosphothreonine; by DCAF1. An N6-crotonyllysine; alternate modification is found at K126. K126 carries the post-translational modification N6-glutaryllysine; alternate.

Belongs to the histone H2A family. In terms of assembly, the nucleosome is a histone octamer containing two molecules each of H2A, H2B, H3 and H4 assembled in one H3-H4 heterotetramer and two H2A-H2B heterodimers. The octamer wraps approximately 147 bp of DNA. Post-translationally, deiminated on Arg-4 in granulocytes upon calcium entry. Monoubiquitination of Lys-120 (H2AK119Ub) by RING1, TRIM37 and RNF2/RING2 complex gives a specific tag for epigenetic transcriptional repression and participates in X chromosome inactivation of female mammals. It is involved in the initiation of both imprinted and random X inactivation. Ubiquitinated H2A is enriched in inactive X chromosome chromatin. Ubiquitination of H2A functions downstream of methylation of 'Lys-27' of histone H3 (H3K27me). H2AK119Ub by RNF2/RING2 can also be induced by ultraviolet and may be involved in DNA repair. Monoubiquitination of Lys-120 (H2AK119Ub) by TRIM37 may promote transformation of cells in a number of breast cancers. Following DNA double-strand breaks (DSBs), it is ubiquitinated through 'Lys-63' linkage of ubiquitin moieties by the E2 ligase UBE2N and the E3 ligases RNF8 and RNF168, leading to the recruitment of repair proteins to sites of DNA damage. Ubiquitination at Lys-14 and Lys-16 (H2AK13Ub and H2AK15Ub, respectively) in response to DNA damage is initiated by RNF168 that mediates monoubiquitination at these 2 sites, and 'Lys-63'-linked ubiquitin are then conjugated to monoubiquitin; RNF8 is able to extend 'Lys-63'-linked ubiquitin chains in vitro. Deubiquitinated by USP51 at Lys-14 and Lys-16 (H2AK13Ub and H2AK15Ub, respectively) after damaged DNA is repaired. H2AK119Ub and ionizing radiation-induced 'Lys-63'-linked ubiquitination (H2AK13Ub and H2AK15Ub) are distinct events. In terms of processing, phosphorylation on Ser-2 (H2AS1ph) is enhanced during mitosis. Phosphorylation on Ser-2 by RPS6KA5/MSK1 directly represses transcription. Acetylation of H3 inhibits Ser-2 phosphorylation by RPS6KA5/MSK1. Phosphorylation at Thr-121 (H2AT120ph) by DCAF1 is present in the regulatory region of many tumor suppresor genes and down-regulates their transcription. Post-translationally, glutamine methylation at Gln-105 (H2AQ104me) by FBL is specifically dedicated to polymerase I. It is present at 35S ribosomal DNA locus and impairs binding of the FACT complex. Symmetric dimethylation on Arg-4 by the PRDM1/PRMT5 complex may play a crucial role in the germ-cell lineage. In terms of processing, crotonylation (Kcr) is specifically present in male germ cells and marks testis-specific genes in post-meiotic cells, including X-linked genes that escape sex chromosome inactivation in haploid cells. Crotonylation marks active promoters and enhancers and confers resistance to transcriptional repressors. It is also associated with post-meiotically activated genes on autosomes. Post-translationally, lactylated in macrophages by EP300/P300 by using lactoyl-CoA directly derived from endogenous or exogenous lactate, leading to stimulates gene transcription.

The protein localises to the nucleus. Its subcellular location is the chromosome. Functionally, core component of nucleosome. Nucleosomes wrap and compact DNA into chromatin, limiting DNA accessibility to the cellular machineries which require DNA as a template. Histones thereby play a central role in transcription regulation, DNA repair, DNA replication and chromosomal stability. DNA accessibility is regulated via a complex set of post-translational modifications of histones, also called histone code, and nucleosome remodeling. In Homo sapiens (Human), this protein is Histone H2A type 1-D.